The sequence spans 172 residues: Histone H1-like protein HC2 (172 aa).

The disordered stretch occupies residues Met-1–Lys-77. The span at Gln-8–Lys-77 shows a compositional bias: basic residues.

Belongs to the histone H1/H5 family. HCT subfamily.

Might have a role in establishing the nucleoid structure of elementary bodies. This Chlamydia pneumoniae (Chlamydophila pneumoniae) protein is Histone H1-like protein HC2 (hctB).